The primary structure comprises 365 residues: tRNA/tmRNA (uracil-C(5))-methyltransferase (365 aa).

Q189, Y217, N222, E238, and D298 together coordinate S-adenosyl-L-methionine. Catalysis depends on C323, which acts as the Nucleophile. The Proton acceptor role is filled by E357.

The protein belongs to the class I-like SAM-binding methyltransferase superfamily. RNA M5U methyltransferase family. TrmA subfamily.

The catalysed reaction is uridine(54) in tRNA + S-adenosyl-L-methionine = 5-methyluridine(54) in tRNA + S-adenosyl-L-homocysteine + H(+). The enzyme catalyses uridine(341) in tmRNA + S-adenosyl-L-methionine = 5-methyluridine(341) in tmRNA + S-adenosyl-L-homocysteine + H(+). In terms of biological role, dual-specificity methyltransferase that catalyzes the formation of 5-methyluridine at position 54 (m5U54) in all tRNAs, and that of position 341 (m5U341) in tmRNA (transfer-mRNA). This Pasteurella multocida (strain Pm70) protein is tRNA/tmRNA (uracil-C(5))-methyltransferase.